A 182-amino-acid polypeptide reads, in one-letter code: Sec-independent protein translocase protein TatB (182 aa).

The chain crosses the membrane as a helical span at residues 1–21; it reads MFDIGFSELLLVFVIGLIVLG. Disordered stretches follow at residues 88-107 and 121-182; these read AAES…ASDE and TQHE…SDKP. The segment covering 168–182 has biased composition (low complexity); the sequence is AAPVVESSPSSSDKP.

This sequence belongs to the TatB family. As to quaternary structure, the Tat system comprises two distinct complexes: a TatABC complex, containing multiple copies of TatA, TatB and TatC subunits, and a separate TatA complex, containing only TatA subunits. Substrates initially bind to the TatABC complex, which probably triggers association of the separate TatA complex to form the active translocon.

The protein resides in the cell inner membrane. Part of the twin-arginine translocation (Tat) system that transports large folded proteins containing a characteristic twin-arginine motif in their signal peptide across membranes. Together with TatC, TatB is part of a receptor directly interacting with Tat signal peptides. TatB may form an oligomeric binding site that transiently accommodates folded Tat precursor proteins before their translocation. In Salmonella typhi, this protein is Sec-independent protein translocase protein TatB.